A 495-amino-acid chain; its full sequence is MALDRSIISKTTWYSVVLWMMVVLVRVHGAAARPNRKEWDSVIKLPTEPVDADSDEVGTRWAVLVAGSNGYGNYRHQADVCHAYQLLIKGGLKEENIVVFMYDDIATNELNPRHGVIINHPEGEDLYAGVPKDYTGDNVTTENLFAVILGDKSKLKGGSGKVINSKPEDRIFIYYSDHGGPGILGMPNMPYLYAMDFIDVLKKKHASGSYKEMVIYVEACESGSVFEGIMPKDLNIYVTTASNAQENSWGTYCPGMDPSPPPEYITCLGDLYSVAWMEDSEAHNLKRESVKQQYKSVKQRTSNFNNYAMGSHVMQYGDTNITAEKLYLYQGFDPATVNFPPQNGRLETKMEVVNQRDAELFLLWQMYQRSNHQSENKTDILKQIAETVKHRKHIDGSVELIGVLLYGPGKGSSVLQSVRAPGSSLVDDWTCLKSMVRVFETHCGTLTQYGMKHMRAFANICNSGVSEASMEEACLAACEGYNAGLFHPSNRGYSA.

A signal peptide spans M1–A32. N138 carries N-linked (GlcNAc...) asparagine glycosylation. The active site involves H178. C220 acts as the Nucleophile in catalysis. C253 and C267 are oxidised to a cystine. Residues N320 and N376 are each glycosylated (N-linked (GlcNAc...) asparagine). 2 disulfide bridges follow: C431-C461 and C443-C478.

This sequence belongs to the peptidase C13 family.

Asparagine-specific endopeptidase involved in the processing of vacuolar seed protein precursors into the mature forms. The chain is Vacuolar-processing enzyme from Glycine max (Soybean).